A 418-amino-acid chain; its full sequence is Serine hydroxymethyltransferase (418 aa).

(6S)-5,6,7,8-tetrahydrofolate-binding positions include leucine 121 and 125–127 (GHL). Lysine 230 carries the post-translational modification N6-(pyridoxal phosphate)lysine. Residue 355-357 (SPF) coordinates (6S)-5,6,7,8-tetrahydrofolate.

This sequence belongs to the SHMT family. As to quaternary structure, homodimer. The cofactor is pyridoxal 5'-phosphate.

The protein localises to the cytoplasm. It catalyses the reaction (6R)-5,10-methylene-5,6,7,8-tetrahydrofolate + glycine + H2O = (6S)-5,6,7,8-tetrahydrofolate + L-serine. It functions in the pathway one-carbon metabolism; tetrahydrofolate interconversion. Its pathway is amino-acid biosynthesis; glycine biosynthesis; glycine from L-serine: step 1/1. Functionally, catalyzes the reversible interconversion of serine and glycine with tetrahydrofolate (THF) serving as the one-carbon carrier. This reaction serves as the major source of one-carbon groups required for the biosynthesis of purines, thymidylate, methionine, and other important biomolecules. Also exhibits THF-independent aldolase activity toward beta-hydroxyamino acids, producing glycine and aldehydes, via a retro-aldol mechanism. In Streptococcus agalactiae serotype III (strain NEM316), this protein is Serine hydroxymethyltransferase.